The primary structure comprises 224 residues: MKNIEKLERSLTYEFKDKNLLIHALTHKSFKKSYNNERLEFLGDAVLDLVVGEYLFHKFAKDAEGDLSKLRAALVNEKSFAKIANSLNLGDFIFMSVAEENNGGREKPSILSDALEAIIGAIHLEAGFEFTKTIALRLIEKNFPQIDAKILIKDYKTKLQEITQGKIGQTPQYETVRAFGPDHLKQFEIALMLDGKELARAIAGSKKEAQQMAAKIALEKLGAL.

The region spanning 4 to 127 (IEKLERSLTY…IIGAIHLEAG (124 aa)) is the RNase III domain. Residue Glu-40 coordinates Mg(2+). The active site involves Asp-44. Residues Asp-113 and Glu-116 each contribute to the Mg(2+) site. The active site involves Glu-116. A DRBM domain is found at 154-223 (DYKTKLQEIT…AKIALEKLGA (70 aa)).

It belongs to the ribonuclease III family. Homodimer. Mg(2+) is required as a cofactor.

The protein resides in the cytoplasm. It carries out the reaction Endonucleolytic cleavage to 5'-phosphomonoester.. Digests double-stranded RNA. Involved in the processing of primary rRNA transcript to yield the immediate precursors to the large and small rRNAs (23S and 16S). Processes some mRNAs, and tRNAs when they are encoded in the rRNA operon. Processes pre-crRNA and tracrRNA of type II CRISPR loci if present in the organism. The polypeptide is Ribonuclease 3 (Campylobacter jejuni (strain RM1221)).